Consider the following 219-residue polypeptide: RING finger protein nenya (219 aa).

An RING-type zinc finger spans residues 6 to 48 (CNKCFRRRNVEPTLIFHMTQCQHVLCASCLSESSTDKKCPLCK). Residues 161–181 (NQARGLRPRTPSVTTSDNTQS) form a disordered region.

May interact with itself, with narya and vilya through its RING-type zinc finger.

Its function is as follows. Required for the formation of DNA double-strand breaks together with narya and vilya during the meiotic recombination process. Plays a redundant role with narya in chromosome segregation during female meiosis. The protein is RING finger protein nenya of Drosophila melanogaster (Fruit fly).